Consider the following 1010-residue polypeptide: Lethal(2) giant larvae protein homolog SRO77 (1010 aa).

WD repeat units lie at residues 47-80, 87-122, 127-163, 182-215, 240-275, 299-364, 372-407, 431-504, 518-595, 602-637, 649-700, 709-763, 768-815, and 829-852; these read TVTT…VVFT, IKHM…TTVF, ITCI…KLKI, SIQW…KQHF, VIQS…IHAR, AIFK…QKLF, LINF…ETLI, VTTC…FEVN, KNIS…STVI, VSAI…FNEN, VSTV…DATK, GINS…THAL, IATS…KNLR, and SILE…SVLN. Residues 932–958 form a disordered region; the sequence is SNAARKLPPGTEDHRYARPVRSSGRSN.

Belongs to the WD repeat L(2)GL family. Interacts with SEC9.

Acts as an allosteric regulator of polarized exocytosis by promoting the targeted fusion of vesicles with the plasma membrane. Involved in maintenance of ion homeostasis in cells exposed to NaCl stress. May be involved in the targeting of the myosin proteins to their intrinsic pathways. Multicopy suppressor of RHO3. May also participate in the maintenance of cell polarity and bud growth. This is Lethal(2) giant larvae protein homolog SRO77 (SRO77) from Saccharomyces cerevisiae (strain ATCC 204508 / S288c) (Baker's yeast).